The sequence spans 321 residues: ATP-dependent 6-phosphofructokinase (321 aa).

Glycine 10 lines the ATP pocket. 20-24 (RAVVR) is an ADP binding site. Residues 71 to 72 (RD) and 101 to 104 (GEGT) each bind ATP. Glutamate 102 provides a ligand contact to Mg(2+). Substrate is bound at residue 125-127 (TID). The Proton acceptor role is filled by aspartate 127. Arginine 154 contributes to the ADP binding site. Residues arginine 162 and 169 to 171 (MGR) contribute to the substrate site. ADP is bound by residues 185-187 (GAE) and 213-215 (KLH). Substrate-binding positions include glutamate 222, arginine 246, and 252–255 (HIQR).

It belongs to the phosphofructokinase type A (PFKA) family. ATP-dependent PFK group I subfamily. Prokaryotic clade 'B1' sub-subfamily. In terms of assembly, homotetramer. The cofactor is Mg(2+).

Its subcellular location is the cytoplasm. It carries out the reaction beta-D-fructose 6-phosphate + ATP = beta-D-fructose 1,6-bisphosphate + ADP + H(+). Its pathway is carbohydrate degradation; glycolysis; D-glyceraldehyde 3-phosphate and glycerone phosphate from D-glucose: step 3/4. Its activity is regulated as follows. Allosterically activated by ADP and other diphosphonucleosides, and allosterically inhibited by phosphoenolpyruvate. Catalyzes the phosphorylation of D-fructose 6-phosphate to fructose 1,6-bisphosphate by ATP, the first committing step of glycolysis. The protein is ATP-dependent 6-phosphofructokinase of Aquifex aeolicus (strain VF5).